Here is a 552-residue protein sequence, read N- to C-terminus: Cytochrome P450 97B1, chloroplastic (552 aa).

Residues 1–52 (MVAAPISTVKLTDANLHTRFHSSSSSTPSTLSLPLSLHFHFSSHSKRFSSIR) constitute a chloroplast transit peptide. Cys-528 is a heme binding site.

Belongs to the cytochrome P450 family. Requires heme as cofactor.

The protein resides in the plastid. Its subcellular location is the chloroplast membrane. This is Cytochrome P450 97B1, chloroplastic (CYP97B1) from Pisum sativum (Garden pea).